A 402-amino-acid polypeptide reads, in one-letter code: Serine/threonine transporter SstT (402 aa).

8 helical membrane passes run 17–37 (IAIG…ITVI), 44–64 (FVGG…ANAL), 78–98 (IIVL…ISHY), 138–158 (ALSQ…GFAM), 179–199 (IVRW…FDTI), 212–232 (VLIL…NPII), 295–315 (MAGA…TLGI), and 336–356 (ASGI…LFGI).

This sequence belongs to the dicarboxylate/amino acid:cation symporter (DAACS) (TC 2.A.23) family.

It localises to the cell membrane. The catalysed reaction is L-serine(in) + Na(+)(in) = L-serine(out) + Na(+)(out). The enzyme catalyses L-threonine(in) + Na(+)(in) = L-threonine(out) + Na(+)(out). Functionally, involved in the import of serine and threonine into the cell, with the concomitant import of sodium (symport system). In Streptococcus thermophilus (strain CNRZ 1066), this protein is Serine/threonine transporter SstT.